A 278-amino-acid polypeptide reads, in one-letter code: Probable ribosomal RNA small subunit methyltransferase A (278 aa).

6 residues coordinate S-adenosyl-L-methionine: histidine 25, methionine 27, glycine 52, glutamate 73, aspartate 98, and asparagine 114.

It belongs to the class I-like SAM-binding methyltransferase superfamily. rRNA adenine N(6)-methyltransferase family. RsmA subfamily.

The protein resides in the cytoplasm. Its function is as follows. Specifically dimethylates two adjacent adenosines in the loop of a conserved hairpin near the 3'-end of 16S rRNA in the 30S particle. May play a critical role in biogenesis of 30S subunits. This chain is Probable ribosomal RNA small subunit methyltransferase A, found in Methanopyrus kandleri (strain AV19 / DSM 6324 / JCM 9639 / NBRC 100938).